The primary structure comprises 701 residues: Elongation factor G (701 aa).

The region spanning 8 to 291 is the tr-type G domain; it reads SRYRNIGIVA…AVIDYLPAPI (284 aa). Residues 17-24, 89-93, and 143-146 contribute to the GTP site; these read AHVDAGKT, DTPGH, and NKMD.

It belongs to the TRAFAC class translation factor GTPase superfamily. Classic translation factor GTPase family. EF-G/EF-2 subfamily.

The protein resides in the cytoplasm. Its function is as follows. Catalyzes the GTP-dependent ribosomal translocation step during translation elongation. During this step, the ribosome changes from the pre-translocational (PRE) to the post-translocational (POST) state as the newly formed A-site-bound peptidyl-tRNA and P-site-bound deacylated tRNA move to the P and E sites, respectively. Catalyzes the coordinated movement of the two tRNA molecules, the mRNA and conformational changes in the ribosome. This is Elongation factor G from Pseudomonas syringae pv. tomato (strain ATCC BAA-871 / DC3000).